Reading from the N-terminus, the 125-residue chain is Small ribosomal subunit protein uS12m (125 aa).

Disordered stretches follow at residues 1–29 and 105–125; these read MPTKNQLIRHGREEKQRTDRTRASDQCPQ and LGIPDRRKGRSKYGAERPKSK. Over residues 10-23 the composition is skewed to basic and acidic residues; it reads HGREEKQRTDRTRA.

This sequence belongs to the universal ribosomal protein uS12 family.

It is found in the mitochondrion. In terms of biological role, protein S12 is involved in the translation initiation step. In Oryza sativa subsp. japonica (Rice), this protein is Small ribosomal subunit protein uS12m (RPS12).